We begin with the raw amino-acid sequence, 165 residues long: UPF0303 protein ACP_1015 (165 aa).

It belongs to the UPF0303 family.

The chain is UPF0303 protein ACP_1015 from Acidobacterium capsulatum (strain ATCC 51196 / DSM 11244 / BCRC 80197 / JCM 7670 / NBRC 15755 / NCIMB 13165 / 161).